The following is a 362-amino-acid chain: 3-dehydroquinate synthase (362 aa).

NAD(+) contacts are provided by residues 72–77, 106–110, 130–131, lysine 142, and lysine 151; these read SGEEAK, GVTGD, and TT. Glutamate 184, histidine 246, and histidine 263 together coordinate Zn(2+).

Belongs to the sugar phosphate cyclases superfamily. Dehydroquinate synthase family. Co(2+) is required as a cofactor. Requires Zn(2+) as cofactor. NAD(+) serves as cofactor.

It is found in the cytoplasm. It catalyses the reaction 7-phospho-2-dehydro-3-deoxy-D-arabino-heptonate = 3-dehydroquinate + phosphate. It functions in the pathway metabolic intermediate biosynthesis; chorismate biosynthesis; chorismate from D-erythrose 4-phosphate and phosphoenolpyruvate: step 2/7. Catalyzes the conversion of 3-deoxy-D-arabino-heptulosonate 7-phosphate (DAHP) to dehydroquinate (DHQ). The chain is 3-dehydroquinate synthase from Bacillus velezensis (strain DSM 23117 / BGSC 10A6 / LMG 26770 / FZB42) (Bacillus amyloliquefaciens subsp. plantarum).